The chain runs to 486 residues: Maintenance of mitochondrial morphology protein 1 (486 aa).

Residues 1-20 are Lumenal-facing; that stretch reads MNFQQSAIPPFSFLLSFTQG. A helical membrane pass occupies residues 21–41; the sequence is FLLGQLSVVLLIGAFIKFFIF. At 42-486 the chain is on the cytoplasmic side; the sequence is GEAPPPPSRG…GSLPDGAVGN (445 aa). 3 disordered regions span residues 70-96, 271-320, and 387-486; these read TNEA…SSST, TPPL…SPKS, and RTGV…AVGN. The span at 83 to 96 shows a compositional bias: polar residues; it reads STSNVLRPVPSSST. In terms of domain architecture, SMP-LTD spans 128–379; sequence QPESLDWFNV…EPRVQVVGLP (252 aa). Pro residues predominate over residues 271 to 282; sequence TPPLHTPSPSPA. Residues 292-306 show a composition bias toward low complexity; sequence QSQPENNSSNPNQQS. 2 stretches are compositionally biased toward polar residues: residues 398–407 and 440–450; these read TGSNAASRSA and DSVSRSSSFNV. Residues 460 to 474 are compositionally biased toward basic and acidic residues; it reads MTREDSRGAISDDFH.

This sequence belongs to the MMM1 family. As to quaternary structure, homodimer. Component of the ER-mitochondria encounter structure (ERMES) or MDM complex, composed of mmm1, mdm10, mdm12 and mdm34. A mmm1 homodimer associates with one molecule of mdm12 on each side in a pairwise head-to-tail manner, and the SMP-LTD domains of mmm1 and mdm12 generate a continuous hydrophobic tunnel for phospholipid trafficking.

Its subcellular location is the endoplasmic reticulum membrane. Its function is as follows. Component of the ERMES/MDM complex, which serves as a molecular tether to connect the endoplasmic reticulum (ER) and mitochondria. Components of this complex are involved in the control of mitochondrial shape and protein biogenesis, and function in nonvesicular lipid trafficking between the ER and mitochondria. The mdm12-mmm1 subcomplex functions in the major beta-barrel assembly pathway that is responsible for biogenesis of all outer membrane beta-barrel proteins, and acts in a late step after the SAM complex. The mdm10-mdm12-mmm1 subcomplex further acts in the TOM40-specific pathway after the action of the mdm12-mmm1 complex. Essential for establishing and maintaining the structure of mitochondria and maintenance of mtDNA nucleoids. The polypeptide is Maintenance of mitochondrial morphology protein 1 (Aspergillus terreus (strain NIH 2624 / FGSC A1156)).